Here is a 435-residue protein sequence, read N- to C-terminus: Mitochondrial distribution and morphology protein 12 (435 aa).

An SMP-LTD domain is found at 1-435; the sequence is MSIEVDWGAA…VYPSFWTFLV (435 aa). 2 disordered regions span residues 73–113 and 186–268; these read DEDD…AINH and WNDS…TSEE. Over residues 96 to 113 the composition is skewed to basic and acidic residues; sequence THPELNESSFRDDNAINH. Over residues 218-238 the composition is skewed to low complexity; the sequence is SSNPTSRPSTSSTLPSHPSGS. Positions 251–268 are enriched in basic and acidic residues; it reads HGSHPEEHGHLDDPTSEE.

It belongs to the MDM12 family. In terms of assembly, component of the ER-mitochondria encounter structure (ERMES) or MDM complex, composed of mmm1, mdm10, mdm12 and mdm34. A mmm1 homodimer associates with one molecule of mdm12 on each side in a pairwise head-to-tail manner, and the SMP-LTD domains of mmm1 and mdm12 generate a continuous hydrophobic tunnel for phospholipid trafficking.

The protein resides in the mitochondrion outer membrane. The protein localises to the endoplasmic reticulum membrane. Component of the ERMES/MDM complex, which serves as a molecular tether to connect the endoplasmic reticulum (ER) and mitochondria. Components of this complex are involved in the control of mitochondrial shape and protein biogenesis, and function in nonvesicular lipid trafficking between the ER and mitochondria. Mdm12 is required for the interaction of the ER-resident membrane protein mmm1 and the outer mitochondrial membrane-resident beta-barrel protein mdm10. The mdm12-mmm1 subcomplex functions in the major beta-barrel assembly pathway that is responsible for biogenesis of all mitochondrial outer membrane beta-barrel proteins, and acts in a late step after the SAM complex. The mdm10-mdm12-mmm1 subcomplex further acts in the TOM40-specific pathway after the action of the mdm12-mmm1 complex. Essential for establishing and maintaining the structure of mitochondria and maintenance of mtDNA nucleoids. This Aspergillus niger (strain ATCC MYA-4892 / CBS 513.88 / FGSC A1513) protein is Mitochondrial distribution and morphology protein 12.